Here is a 247-residue protein sequence, read N- to C-terminus: MLTQVLFEHPLNEKMRTWLRIEFLIQQLSVNLPVADHAGALHFFRNIADLLDVFERGEVRTELLKELERQQRKLQAWIEVPGVDQDRIEALRTELKNAGSILISAPRIGQFLREDRLIALVRQRLSIPGGCCSFDLPTLHIWLHMPQAMRDAQIETWLASLSPLNHALTLVLDLIRNSVPFRKQTSLNGFYQDNGEDADLLRLQLPLDSQLYPQISGHKSRFAIRFMPLDSENGLVPERLDFELACC.

Belongs to the ZapD family. As to quaternary structure, interacts with FtsZ.

It is found in the cytoplasm. Its function is as follows. Cell division factor that enhances FtsZ-ring assembly. Directly interacts with FtsZ and promotes bundling of FtsZ protofilaments, with a reduction in FtsZ GTPase activity. The polypeptide is Cell division protein ZapD (Escherichia fergusonii (strain ATCC 35469 / DSM 13698 / CCUG 18766 / IAM 14443 / JCM 21226 / LMG 7866 / NBRC 102419 / NCTC 12128 / CDC 0568-73)).